Consider the following 149-residue polypeptide: Large ribosomal subunit protein uL15 (149 aa).

Residues 1 to 29 (MVSHLKKTRKLRGHVSHGHGRVGKHRKGG) show a composition bias toward basic residues. The interval 1–38 (MVSHLKKTRKLRGHVSHGHGRVGKHRKGGCRGGRGKAG) is disordered.

Belongs to the universal ribosomal protein uL15 family.

The protein is Large ribosomal subunit protein uL15 (RPL27A) of Tetrahymena thermophila.